A 530-amino-acid polypeptide reads, in one-letter code: Rho GTPase-activating protein 36 (530 aa).

An N-terminal signal peptide occupies residues M1–G19. One can recognise a Rho-GAP domain in the interval M209–F409. The interval G471–L512 is disordered.

May interacts (via the Rho-GAP domain) with the active form of RAC1.

Its function is as follows. GTPase activator for the Rho-type GTPases by converting them to an inactive GDP-bound state. This Bos taurus (Bovine) protein is Rho GTPase-activating protein 36 (ARHGAP36).